A 2215-amino-acid polypeptide reads, in one-letter code: Unconventional myosin-VIIa (2215 aa).

The region spanning 65–741 is the Myosin motor domain; it reads HGVEDMIRLG…HDMLLEVERD (677 aa). Residue 158–165 coordinates ATP; that stretch reads GESGAGKT. An actin-binding region spans residues 632–639; sequence FVRCIKPN. IQ domains lie at 745 to 765, 768 to 788, 791 to 811, 814 to 834, and 837 to 857; these read TDRVILLQKVIRGFKDRSNFL, KNAATLIQRHWRGHNCRKNYG, RLGFLRLQALHRSRKLHQQYR, RQRIIQFQARCRAYLVRKAFR, and LWAVLTVQAYARGMIARRLHQ. An SAH region spans residues 858 to 935; the sequence is RLRAEYLWRL…LEQMERARHE (78 aa). In terms of domain architecture, MyTH4 1 spans 1017–1253; that stretch reads YTRRPLKQPL…PSWLELQATK (237 aa). The FERM 1 domain maps to 1258–1602; sequence IMLPVTFMDG…LVVTFLEGLR (345 aa). A Phosphoserine modification is found at Ser1569. Thr1571 is modified (phosphothreonine). The region spanning 1603 to 1672 is the SH3 domain; sequence KRSKYVVALQ…PTDSVYVMPT (70 aa). A MyTH4 2 domain is found at 1747 to 1896; the sequence is HTREPLKQAL…PHLVEVEAIQ (150 aa). One can recognise an FERM 2 domain in the interval 1902 to 2205; sequence IFHKVYFPDD…SYISQMLTAM (304 aa).

Belongs to the TRAFAC class myosin-kinesin ATPase superfamily. Myosin family. Might homodimerize in a two headed molecule through the formation of a coiled-coil rod. Identified in a complex with USH1C and USH1G. Interacts with MYRIP. Interacts with RPE65. Interacts with CIB2. May interact with CALM. Interacts with WHRN. Interacts with PLEKHB1 (via PH domain). Interacts with PCDH15. Interacts with TWF2. Interacts with USH1G. Interacts with MYH9. Interacts (via MyTH4-FERM domains) with cytoplasmic regions of ADGRV1 and USH2A. Interacts with PDZD7 (via MyTH4-FERM domains). Interacts with CALML4. In terms of tissue distribution, expressed in the pigment epithelium and the photoreceptor cells of the retina. Also found in kidney, liver, testis, cochlea, lymphocytes. Not expressed in brain.

The protein resides in the cytoplasm. It is found in the cell cortex. The protein localises to the cytoskeleton. It localises to the synapse. Its activity is regulated as follows. ATP hydrolysis is inhibited by Mg(2+), already at a concentration of 0.4 mM. In terms of biological role, myosins are actin-based motor molecules with ATPase activity. Unconventional myosins serve in intracellular movements. Their highly divergent tails bind to membranous compartments, which are then moved relative to actin filaments. In the retina, plays an important role in the renewal of the outer photoreceptor disks. Plays an important role in the distribution and migration of retinal pigment epithelial (RPE) melanosomes and phagosomes, and in the regulation of opsin transport in retinal photoreceptors. In the inner ear, plays an important role in differentiation, morphogenesis and organization of cochlear hair cell bundles. Involved in hair-cell vesicle trafficking of aminoglycosides, which are known to induce ototoxicity. Motor protein that is a part of the functional network formed by USH1C, USH1G, CDH23 and MYO7A that mediates mechanotransduction in cochlear hair cells. Required for normal hearing. The chain is Unconventional myosin-VIIa from Homo sapiens (Human).